The sequence spans 197 residues: MGIRHELDILLVSENLALKNVELLKGDSYGCTINIKVNQQKKLDFIIILRPDWTEVRNVKKINMVCNGVVIDTTLIKKSFYEEVYSSSVTVFQNTTVEFFSDTSKKYKEEYPIVNINTIKRYYEIKDSRMTCINFESPISDYDQVNYLKDYINISDDYYLYDACDDCIISSDHDDNDNADDDEEDDDEVNDIEDDYE.

The disordered stretch occupies residues 172-197; sequence DHDDNDNADDDEEDDDEVNDIEDDYE. The segment covering 174-197 has biased composition (acidic residues); the sequence is DDNDNADDDEEDDDEVNDIEDDYE.

Belongs to the poxviridae C7 protein family.

The polypeptide is Probable host range protein 2 (Ovis aries (Sheep)).